A 175-amino-acid polypeptide reads, in one-letter code: Lactobacillus up-regulated protein (175 aa).

An N-terminal signal peptide occupies residues Met1–Ala18. An N-linked (GlcNAc...) asparagine glycan is attached at Asn59.

This is Lactobacillus up-regulated protein (lbuA) from Emericella nidulans (strain FGSC A4 / ATCC 38163 / CBS 112.46 / NRRL 194 / M139) (Aspergillus nidulans).